Here is a 74-residue protein sequence, read N- to C-terminus: Small ribosomal subunit protein bS18 (74 aa).

The protein belongs to the bacterial ribosomal protein bS18 family. In terms of assembly, part of the 30S ribosomal subunit. Forms a tight heterodimer with protein bS6.

Binds as a heterodimer with protein bS6 to the central domain of the 16S rRNA, where it helps stabilize the platform of the 30S subunit. The protein is Small ribosomal subunit protein bS18 of Sphingopyxis alaskensis (strain DSM 13593 / LMG 18877 / RB2256) (Sphingomonas alaskensis).